Reading from the N-terminus, the 369-residue chain is Ferredoxin--NADP reductase 2 (369 aa).

A disordered region spans residues 1 to 23; that stretch reads MDLSIPNPVADTTKQVDGGSPAG. FAD contacts are provided by Asp-58, Gln-66, Tyr-71, Val-111, Phe-146, Asp-311, and Thr-352.

Belongs to the ferredoxin--NADP reductase type 2 family. In terms of assembly, homodimer. The cofactor is FAD.

The catalysed reaction is 2 reduced [2Fe-2S]-[ferredoxin] + NADP(+) + H(+) = 2 oxidized [2Fe-2S]-[ferredoxin] + NADPH. The polypeptide is Ferredoxin--NADP reductase 2 (Cupriavidus necator (strain ATCC 17699 / DSM 428 / KCTC 22496 / NCIMB 10442 / H16 / Stanier 337) (Ralstonia eutropha)).